Here is a 255-residue protein sequence, read N- to C-terminus: Type III pantothenate kinase (255 aa).

6–13 serves as a coordination point for ATP; it reads DVGNTNIV. Substrate-binding positions include Y100 and 107 to 110; that span reads GADR. The active-site Proton acceptor is D109. D129 contacts K(+). T132 contacts ATP. T184 contributes to the substrate binding site.

This sequence belongs to the type III pantothenate kinase family. In terms of assembly, homodimer. Requires NH4(+) as cofactor. It depends on K(+) as a cofactor.

The protein localises to the cytoplasm. It carries out the reaction (R)-pantothenate + ATP = (R)-4'-phosphopantothenate + ADP + H(+). Its pathway is cofactor biosynthesis; coenzyme A biosynthesis; CoA from (R)-pantothenate: step 1/5. In terms of biological role, catalyzes the phosphorylation of pantothenate (Pan), the first step in CoA biosynthesis. This chain is Type III pantothenate kinase, found in Geobacter sulfurreducens (strain ATCC 51573 / DSM 12127 / PCA).